The primary structure comprises 652 residues: DNA ligase (652 aa).

Residues 29-33 (DSQYD), 78-79 (SL), and Glu-107 each bind NAD(+). Catalysis depends on Lys-109, which acts as the N6-AMP-lysine intermediate. 4 residues coordinate NAD(+): Arg-130, Glu-164, Lys-278, and Lys-302. Zn(2+) contacts are provided by Cys-395, Cys-398, Cys-413, and Cys-418. The BRCT domain occupies 577–652 (STDAQLSGLT…IQDEDWLLNL (76 aa)).

It belongs to the NAD-dependent DNA ligase family. LigA subfamily. Mg(2+) serves as cofactor. Mn(2+) is required as a cofactor.

The enzyme catalyses NAD(+) + (deoxyribonucleotide)n-3'-hydroxyl + 5'-phospho-(deoxyribonucleotide)m = (deoxyribonucleotide)n+m + AMP + beta-nicotinamide D-nucleotide.. DNA ligase that catalyzes the formation of phosphodiester linkages between 5'-phosphoryl and 3'-hydroxyl groups in double-stranded DNA using NAD as a coenzyme and as the energy source for the reaction. It is essential for DNA replication and repair of damaged DNA. The protein is DNA ligase of Streptococcus agalactiae serotype III (strain NEM316).